The chain runs to 101 residues: Putative pterin-4-alpha-carbinolamine dehydratase (101 aa).

Belongs to the pterin-4-alpha-carbinolamine dehydratase family.

The enzyme catalyses (4aS,6R)-4a-hydroxy-L-erythro-5,6,7,8-tetrahydrobiopterin = (6R)-L-erythro-6,7-dihydrobiopterin + H2O. The polypeptide is Putative pterin-4-alpha-carbinolamine dehydratase (Rhodopseudomonas palustris (strain HaA2)).